Reading from the N-terminus, the 147-residue chain is Large ribosomal subunit protein bL9 (147 aa).

Belongs to the bacterial ribosomal protein bL9 family.

In terms of biological role, binds to the 23S rRNA. This Clostridium botulinum (strain ATCC 19397 / Type A) protein is Large ribosomal subunit protein bL9.